A 144-amino-acid polypeptide reads, in one-letter code: Prefoldin subunit alpha (144 aa).

Belongs to the prefoldin subunit alpha family. As to quaternary structure, heterohexamer of two alpha and four beta subunits.

The protein localises to the cytoplasm. Its function is as follows. Molecular chaperone capable of stabilizing a range of proteins. Seems to fulfill an ATP-independent, HSP70-like function in archaeal de novo protein folding. This Methanosarcina barkeri (strain Fusaro / DSM 804) protein is Prefoldin subunit alpha.